A 220-amino-acid chain; its full sequence is Ripening-related protein grip22 (220 aa).

The N-terminal stretch at 1 to 27 is a signal peptide; that stretch reads MAKSALVWLASVCLVFNILSLPFLALG.

The protein belongs to the kiwellin family. As to expression, expressed in ripening fruits.

It localises to the secreted. The sequence is that of Ripening-related protein grip22 (grip22) from Vitis vinifera (Grape).